The chain runs to 2320 residues: Sperm-associated antigen 17 (2320 aa).

Composition is skewed to basic and acidic residues over residues 139 to 171 (DQQR…EKKV) and 199 to 210 (RRGEDDEAKSYI). Disordered regions lie at residues 139-211 (DQQR…SYID), 388-407 (IPEP…KAQY), 682-739 (AEQD…SMDQ), 894-928 (SASK…EKDK), 950-1001 (EERL…AKTL), 1084-1118 (KEKE…EKVK), 1191-1221 (QGKG…EKKN), 1334-1367 (SSPD…KSET), 1393-1416 (DIIP…TTTP), 1983-2028 (KEAS…YENV), and 2080-2101 (TKES…EEPD). The segment covering 703 to 720 (VTGSTSNSTKPWNSSNRQ) has biased composition (polar residues). Positions 865 to 965 (EEAKYQEAKM…EKKAEKKGKD (101 aa)) form a coiled coil. Composition is skewed to basic and acidic residues over residues 914–928 (ELSD…EKDK) and 950–999 (EERL…EPAK). Over residues 1090–1103 (NSEEEEEEEEEKEE) the composition is skewed to acidic residues. Composition is skewed to basic and acidic residues over residues 1104–1118 (VEEK…EKVK) and 1203–1221 (KHKD…EKKN). Polar residues-rich tracts occupy residues 2012 to 2028 (VNKS…YENV) and 2082 to 2094 (ESVS…NVTR).

Interacts (via the C-terminus) with SPAG6; the interaction probably occurs on polymerized microtubules. In terms of tissue distribution, highly expressed in testis, round spermatids, testicular sperm, epididymal sperm and in condensing spermatids (at protein level). Expressed in organs that contain cilia-bearing cells including brain, oviduct, lung, and uterus. Expressed in articular cartilage and bone.

It localises to the cytoplasm. It is found in the cytoskeleton. The protein localises to the flagellum axoneme. The protein resides in the cytoplasmic vesicle. Its subcellular location is the secretory vesicle. It localises to the acrosome. It is found in the golgi apparatus. Functionally, component of the central pair apparatus of ciliary axonemes. Plays a critical role in the function and structure of motile cilia. May play a role in endochondral bone formation, most likely because of a function in primary cilia of chondrocytes and osteoblasts. Essential for normal spermatogenesis and male fertility. Required for normal manchette structure, transport of proteins along the manchette microtubules and formation of the sperm head and flagellum. Essential for sperm flagellum development and proper assembly of the respiratory motile cilia central pair apparatus, but not the brain ependymal cilia. In Mus musculus (Mouse), this protein is Sperm-associated antigen 17 (Spag17).